The following is a 272-amino-acid chain: Inositol monophosphatase (272 aa).

Glutamate 71, aspartate 90, isoleucine 92, and aspartate 93 together coordinate Mg(2+). Glutamate 71 is a substrate binding site. Residues isoleucine 92–threonine 95, glycine 194–alanine 196, glutamate 213, and aspartate 220 each bind substrate. Position 220 (aspartate 220) interacts with Mg(2+).

The protein belongs to the inositol monophosphatase superfamily. It depends on Mg(2+) as a cofactor.

Its subcellular location is the cytoplasm. It carries out the reaction a myo-inositol phosphate + H2O = myo-inositol + phosphate. It catalyses the reaction alpha-D-galactose 1-phosphate + H2O = D-galactose + phosphate. It functions in the pathway polyol metabolism; myo-inositol biosynthesis; myo-inositol from D-glucose 6-phosphate: step 2/2. Its activity is regulated as follows. Inhibited by Li(+), Ca(2+) and Mn(2+), but also by Mg(2+) at concentrations above 3 mM. In terms of biological role, responsible for the provision of inositol required for synthesis of phosphatidylinositol and polyphosphoinositides. Has broad substrate specificity and can use myo-inositol monophosphates, myo-inositol 1,3-diphosphate, myo-inositol 1,4-diphosphate, scyllo-inositol-phosphate, D-galactose 1-phosphate, glucose-1-phosphate, glucose-6-phosphate, fructose-1-phosphate, beta-glycerophosphate, and 2'-AMP as substrates. This chain is Inositol monophosphatase (impa1), found in Dictyostelium discoideum (Social amoeba).